The chain runs to 357 residues: Probable cinnamyl alcohol dehydrogenase (357 aa).

Residue cysteine 47 participates in Zn(2+) binding. Position 49 (threonine 49) interacts with NADP(+). Zn(2+)-binding residues include histidine 69, glutamate 70, cysteine 100, cysteine 103, cysteine 106, cysteine 114, and cysteine 163. NADP(+) is bound by residues threonine 167, 188–193 (GLGGVG), 211–216 (SSSDKK), threonine 251, glycine 275, and 298–300 (SFI).

The protein belongs to the zinc-containing alcohol dehydrogenase family. Homodimer. Zn(2+) is required as a cofactor.

The enzyme catalyses (E)-cinnamyl alcohol + NADP(+) = (E)-cinnamaldehyde + NADPH + H(+). It catalyses the reaction (E)-coniferol + NADP(+) = (E)-coniferaldehyde + NADPH + H(+). It carries out the reaction (E)-sinapyl alcohol + NADP(+) = (E)-sinapaldehyde + NADPH + H(+). The catalysed reaction is (E)-4-coumaroyl alcohol + NADP(+) = (E)-4-coumaraldehyde + NADPH + H(+). The enzyme catalyses (E)-caffeyl alcohol + NADP(+) = (E)-caffeyl aldehyde + NADPH + H(+). Its pathway is aromatic compound metabolism; phenylpropanoid biosynthesis. In terms of biological role, involved in lignin biosynthesis. Catalyzes the final step specific for the production of lignin monomers. Catalyzes the NADPH-dependent reduction of coniferaldehyde, 5-hydroxyconiferaldehyde, sinapaldehyde, 4-coumaraldehyde and caffeyl aldehyde to their respective alcohols. The chain is Probable cinnamyl alcohol dehydrogenase from Populus deltoides (Eastern poplar).